The following is a 132-amino-acid chain: MAKDILGEAGLHFDELNKLRVLDPEVTQQTIELKEECKDFVDKIGQFQKIVGGLIELVDQLAKEAENEKMKAIGARNLLKSIAKQREAQQQQLQALIAEKKMQLERYRVEYEALCKVEAEQNEFIDQFIFQK.

The IFT57-binding stretch occupies residues 70–132 (MKAIGARNLL…EFIDQFIFQK (63 aa)). Residues 74–114 (GARNLLKSIAKQREAQQQQLQALIAEKKMQLERYRVEYEAL) are a coiled coil.

As to quaternary structure, component of the IFT complex B, at least composed of IFT20, IFT22, IFT25, IFT27, IFT46, IFT52, TRAF3IP1/IFT54, IFT57, IFT74, IFT80, IFT81, and IFT88. Interacts directly with IFT57 and KIF3B/Kinesin II subunit. Interacts with IFT88. Interacts with CEP83. Interacts with SPEF2 (via C-terminus). Interacts with CBL and CBLB. Interacts with TRIP11. Interacts with TTC21A. Interacts with SPATA1. Interacts with USH1G. Interacts with CCDC146. Interacts with CEP78; regulating IFT20 stability and localization. In terms of tissue distribution, expressed in almost all tissues.

Its subcellular location is the golgi apparatus. The protein resides in the cis-Golgi network. It is found in the cytoplasm. It localises to the cytoskeleton. The protein localises to the microtubule organizing center. Its subcellular location is the centrosome. The protein resides in the centriole. It is found in the cilium basal body. It localises to the cell projection. The protein localises to the cilium. Its subcellular location is the cytoplasmic vesicle. The protein resides in the secretory vesicle. It is found in the acrosome. In terms of biological role, part of intraflagellar transport (IFT) particles involved in ciliary process assembly. May play a role in the trafficking of ciliary membrane proteins from the Golgi complex to the cilium. Regulates the platelet-derived growth factor receptor-alpha (PDGFRA) signaling pathway. Required for protein stability of E3 ubiquitin ligases CBL and CBLB that mediate ubiquitination and internalization of PDGFRA for proper feedback inhibition of PDGFRA signaling. Essential for male fertility. Plays an important role in spermatogenesis, particularly spermiogenesis, when germ cells form flagella. May play a role in the transport of flagellar proteins ODF2 and SPAG16 to build sperm flagella and in the removal of redundant sperm cytoplasm. Also involved in autophagy since it is required for trafficking of ATG16L and the expansion of the autophagic compartment. The chain is Intraflagellar transport protein 20 homolog (IFT20) from Homo sapiens (Human).